A 130-amino-acid chain; its full sequence is Histone H2A type 1 (130 aa).

The disordered stretch occupies residues 1–22; the sequence is MSGRGKQGGKARAKAKTRSSRA. Ser2 carries the post-translational modification N-acetylserine. Position 2 is a phosphoserine; by RPS6KA5 (Ser2). Citrulline; alternate is present on Arg4. The residue at position 4 (Arg4) is a Symmetric dimethylarginine; by PRMT5; alternate. Lys6 carries the post-translational modification N6-(2-hydroxyisobutyryl)lysine. The segment covering 7-19 has biased composition (basic residues); it reads QGGKARAKAKTRS. Lys10 is subject to N6-(2-hydroxyisobutyryl)lysine; alternate. At Lys10 the chain carries N6-lactoyllysine; alternate. Lys10 is modified (N6-succinyllysine; alternate). Glycyl lysine isopeptide (Lys-Gly) (interchain with G-Cter in ubiquitin) cross-links involve residues Lys14 and Lys16. An N6-(2-hydroxyisobutyryl)lysine; alternate modification is found at Lys37. Position 37 is an N6-(beta-hydroxybutyryl)lysine; alternate (Lys37). Lys37 carries the N6-crotonyllysine; alternate modification. An N6-(2-hydroxyisobutyryl)lysine mark is found at Lys75 and Lys76. N6-(2-hydroxyisobutyryl)lysine; alternate is present on Lys96. N6-succinyllysine; alternate is present on Lys96. Lys96 carries the post-translational modification N6-glutaryllysine; alternate. At Lys100 the chain carries N6-glutaryllysine. Gln105 is subject to N5-methylglutamine. Lys119 carries the N6-(2-hydroxyisobutyryl)lysine; alternate modification. An N6-crotonyllysine; alternate mark is found at Lys119 and Lys120. N6-glutaryllysine; alternate occurs at positions 119 and 120. Lys120 participates in a covalent cross-link: Glycyl lysine isopeptide (Lys-Gly) (interchain with G-Cter in ubiquitin); alternate. Thr121 carries the phosphothreonine; by DCAF1 modification. The residue at position 126 (Lys126) is an N6-crotonyllysine; alternate. Lys126 bears the N6-glutaryllysine; alternate mark.

This sequence belongs to the histone H2A family. As to quaternary structure, the nucleosome is a histone octamer containing two molecules each of H2A, H2B, H3 and H4 assembled in one H3-H4 heterotetramer and two H2A-H2B heterodimers. The octamer wraps approximately 147 bp of DNA. Interacts with VRK1; the interaction is mediated by the nucleosome acidic patch, a cluster of negatively charged residues of H2A and H2B forming a cleft within the nucleosome core. Deiminated on Arg-4 in granulocytes upon calcium entry. Post-translationally, monoubiquitination of Lys-120 (H2AK119Ub) by RING1, TRIM37 and RNF2/RING2 complex gives a specific tag for epigenetic transcriptional repression and participates in X chromosome inactivation of female mammals. It is involved in the initiation of both imprinted and random X inactivation. Ubiquitinated H2A is enriched in inactive X chromosome chromatin. Ubiquitination of H2A functions downstream of methylation of 'Lys-27' of histone H3 (H3K27me). H2AK119Ub by RNF2/RING2 can also be induced by ultraviolet and may be involved in DNA repair. Following DNA double-strand breaks (DSBs), it is ubiquitinated through 'Lys-63' linkage of ubiquitin moieties by the E2 ligase UBE2N and the E3 ligases RNF8 and RNF168, leading to the recruitment of repair proteins to sites of DNA damage. Ubiquitination at Lys-14 and Lys-16 (H2AK13Ub and H2AK15Ub, respectively) in response to DNA damage is initiated by RNF168 that mediates monoubiquitination at these 2 sites, and 'Lys-63'-linked ubiquitin are then conjugated to monoubiquitin; RNF8 is able to extend 'Lys-63'-linked ubiquitin chains in vitro. H2AK119Ub and ionizing radiation-induced 'Lys-63'-linked ubiquitination (H2AK13Ub and H2AK15Ub) are distinct events. In terms of processing, phosphorylation on Ser-2 (H2AS1ph) is enhanced during mitosis. Phosphorylation on Ser-2 by RPS6KA5/MSK1 directly represses transcription. Acetylation of H3 inhibits Ser-2 phosphorylation by RPS6KA5/MSK1. Phosphorylation at Thr-121 (H2AT120ph) by DCAF1 is present in the regulatory region of many tumor suppresor genes and down-regulates their transcription. Symmetric dimethylation on Arg-4 by the PRDM1/PRMT5 complex may play a crucial role in the germ-cell lineage. Post-translationally, glutamine methylation at Gln-105 (H2AQ104me) by FBL is specifically dedicated to polymerase I. It is present at 35S ribosomal DNA locus and impairs binding of the FACT complex. In terms of processing, crotonylation (Kcr) is specifically present in male germ cells and marks testis-specific genes in post-meiotic cells, including X-linked genes that escape sex chromosome inactivation in haploid cells. Crotonylation marks active promoters and enhancers and confers resistance to transcriptional repressors. It is also associated with post-meiotically activated genes on autosomes. Lactylated in macrophages by EP300/P300 by using lactoyl-CoA directly derived from endogenous or exogenous lactate, leading to stimulates gene transcription.

It localises to the nucleus. Its subcellular location is the chromosome. In terms of biological role, core component of nucleosome. Nucleosomes wrap and compact DNA into chromatin, limiting DNA accessibility to the cellular machineries which require DNA as a template. Histones thereby play a central role in transcription regulation, DNA repair, DNA replication and chromosomal stability. DNA accessibility is regulated via a complex set of post-translational modifications of histones, also called histone code, and nucleosome remodeling. In Bos taurus (Bovine), this protein is Histone H2A type 1.